Here is a 469-residue protein sequence, read N- to C-terminus: Glutamate--tRNA ligase 2 (469 aa).

A 'HIGH' region motif is present at residues 10 to 20 (PSPTGYLHIGG). Zn(2+)-binding residues include cysteine 99, cysteine 101, cysteine 126, and aspartate 128. Residues 237 to 241 (RLSKR) carry the 'KMSKS' region motif. Residue lysine 240 participates in ATP binding.

Belongs to the class-I aminoacyl-tRNA synthetase family. Glutamate--tRNA ligase type 1 subfamily. As to quaternary structure, monomer. The cofactor is Zn(2+).

The protein localises to the cytoplasm. The enzyme catalyses tRNA(Glu) + L-glutamate + ATP = L-glutamyl-tRNA(Glu) + AMP + diphosphate. Its function is as follows. Catalyzes the attachment of glutamate to tRNA(Glu) in a two-step reaction: glutamate is first activated by ATP to form Glu-AMP and then transferred to the acceptor end of tRNA(Glu). In Coxiella burnetii (strain CbuG_Q212) (Coxiella burnetii (strain Q212)), this protein is Glutamate--tRNA ligase 2.